The sequence spans 295 residues: Acetylglutamate kinase (295 aa).

Residues 64–65 (GG), R86, and N190 each bind substrate.

Belongs to the acetylglutamate kinase family. ArgB subfamily.

Its subcellular location is the cytoplasm. It catalyses the reaction N-acetyl-L-glutamate + ATP = N-acetyl-L-glutamyl 5-phosphate + ADP. It participates in amino-acid biosynthesis; L-arginine biosynthesis; N(2)-acetyl-L-ornithine from L-glutamate: step 2/4. Its function is as follows. Catalyzes the ATP-dependent phosphorylation of N-acetyl-L-glutamate. The sequence is that of Acetylglutamate kinase from Heliobacterium modesticaldum (strain ATCC 51547 / Ice1).